Reading from the N-terminus, the 1793-residue chain is uncharacterized protein (1793 aa).

Disordered stretches follow at residues 156–189 (ARQA…ASSQ), 204–362 (QRES…PPKV), and 407–505 (ASFG…SGAA). A compositionally biased stretch (polar residues) spans 166 to 175 (SSAQDSQELK). The segment covering 227–237 (SPKEKAQDEPS) has biased composition (basic and acidic residues). Polar residues predominate over residues 238–247 (SKTPSPQNNP). Residues 248 to 258 (ASSQLSRSQHS) are compositionally biased toward low complexity. The span at 277-288 (KAEEDGLSKMED) shows a compositional bias: basic and acidic residues. Over residues 289–307 (STTSTGALATSSSSLGFES) the composition is skewed to low complexity. Over residues 317–342 (AVGGEGEKISGGGGGGKGGGGGGAGD) the composition is skewed to gly residues. Residues 434 to 450 (STTPSTNTTRTPSPTSS) are compositionally biased toward low complexity. Positions 463–476 (DTSSTEVGSGPSDS) are enriched in polar residues. The segment covering 485-505 (PGTAPLTEPLPETPEAASGAA) has biased composition (low complexity). Thr733 is modified (phosphothreonine). Disordered regions lie at residues 757 to 809 (RSES…SKFA), 829 to 917 (MERG…FTDG), 1090 to 1147 (RDIR…GSGS), 1161 to 1187 (QRED…NSSS), 1229 to 1249 (QKTP…ATKP), 1408 to 1465 (TGGV…KSNS), and 1482 to 1567 (GELL…PLPF). Composition is skewed to basic and acidic residues over residues 829–839 (MERGEVMDTSH) and 846–872 (KETE…HSEA). The span at 1113–1123 (KGSGDSSDKGS) shows a compositional bias: low complexity. Residues 1161 to 1174 (QREDSMDREPRESM) are compositionally biased toward basic and acidic residues. Ser1187 carries the post-translational modification Phosphoserine. The segment covering 1231–1246 (TPEKLKEEEVKEEGKA) has biased composition (basic and acidic residues). The segment covering 1513–1528 (SQVPSSSKGSQVSGTS) has biased composition (low complexity). Residues 1546–1555 (PPGPQSPEHP) are compositionally biased toward pro residues. Arg1774 carries the post-translational modification Omega-N-methylarginine.

Expressed in muscle, heart, kidney and liver but barely detectable in lung, pancreas and brain. In liver veins, expressed in hepatic vein, extrahepatic portal vein and intrahepatic portal vein.

This is an uncharacterized protein from Homo sapiens (Human).